Here is a 424-residue protein sequence, read N- to C-terminus: Glutamate-1-semialdehyde 2,1-aminomutase (424 aa).

Lys263 bears the N6-(pyridoxal phosphate)lysine mark.

The protein belongs to the class-III pyridoxal-phosphate-dependent aminotransferase family. HemL subfamily. Homodimer. It depends on pyridoxal 5'-phosphate as a cofactor.

The protein localises to the cytoplasm. The enzyme catalyses (S)-4-amino-5-oxopentanoate = 5-aminolevulinate. The protein operates within porphyrin-containing compound metabolism; protoporphyrin-IX biosynthesis; 5-aminolevulinate from L-glutamyl-tRNA(Glu): step 2/2. The sequence is that of Glutamate-1-semialdehyde 2,1-aminomutase from Campylobacter jejuni subsp. jejuni serotype O:23/36 (strain 81-176).